Reading from the N-terminus, the 1252-residue chain is Fanconi anemia group J protein homolog (1252 aa).

The Helicase ATP-binding domain occupies 11 to 452 (GGVKIMFPCK…KDHEQLRAMC (442 aa)). Positions 164-181 (RKRIRPLETEQQVRKRHC) match the Nuclear localization signal motif. ATP is bound at residue 191-198 (ALEVYNQR). Cys292, Cys308, Cys320, and Cys360 together coordinate [4Fe-4S] cluster. Positions 403–406 (DEAH) match the DEAH box motif. 2 disordered regions span residues 919–1008 (SKEP…DRTN) and 1212–1252 (TNGE…STST). Polar residues-rich tracts occupy residues 920-930 (KEPSSASQQEA) and 952-969 (HLTT…NQPG). Positions 989–1008 (MDSTPRRPANKTEKKSDRTN) are enriched in basic and acidic residues. Acidic residues predominate over residues 1215–1224 (EEAEQVESQE). A compositionally biased stretch (basic residues) spans 1228–1239 (KKRKISLSRSRN).

This sequence belongs to the DEAD box helicase family. DEAH subfamily. The cofactor is [4Fe-4S] cluster.

Its subcellular location is the nucleus. It carries out the reaction Couples ATP hydrolysis with the unwinding of duplex DNA at the replication fork by translocating in the 5'-3' direction. This creates two antiparallel DNA single strands (ssDNA). The leading ssDNA polymer is the template for DNA polymerase III holoenzyme which synthesizes a continuous strand.. The enzyme catalyses ATP + H2O = ADP + phosphate + H(+). Functionally, DNA-dependent helicase and 5' to 3' DNA helicase required for the maintenance of chromosomal stability. Involved in the repair of DNA double-strand breaks by homologous recombination. Involved in the repair of abasic sites at replication forks by promoting the degradation of DNA-protein cross-links: acts by catalyzing unfolding of HMCES DNA-protein cross-link via its helicase activity, exposing the underlying DNA and enabling cleavage of the DNA-protein adduct by the SPRTN metalloprotease. This chain is Fanconi anemia group J protein homolog (BRIP1), found in Gallus gallus (Chicken).